Reading from the N-terminus, the 36-residue chain is Photosystem II reaction center protein M (36 aa).

A helical transmembrane segment spans residues 5 to 25 (ILGVIATALFIIIPTSFLLIL).

The protein belongs to the PsbM family. As to quaternary structure, PSII is composed of 1 copy each of membrane proteins PsbA, PsbB, PsbC, PsbD, PsbE, PsbF, PsbH, PsbI, PsbJ, PsbK, PsbL, PsbM, PsbT, PsbX, PsbY, PsbZ, Psb30/Ycf12, at least 3 peripheral proteins of the oxygen-evolving complex and a large number of cofactors. It forms dimeric complexes.

The protein localises to the plastid. It localises to the chloroplast thylakoid membrane. Functionally, one of the components of the core complex of photosystem II (PSII). PSII is a light-driven water:plastoquinone oxidoreductase that uses light energy to abstract electrons from H(2)O, generating O(2) and a proton gradient subsequently used for ATP formation. It consists of a core antenna complex that captures photons, and an electron transfer chain that converts photonic excitation into a charge separation. This subunit is found at the monomer-monomer interface. This chain is Photosystem II reaction center protein M, found in Chlorella vulgaris (Green alga).